A 280-amino-acid chain; its full sequence is Shikimate dehydrogenase (NADP(+)) (280 aa).

Residues 15–17 and threonine 62 each bind shikimate; that span reads SLS. Catalysis depends on lysine 66, which acts as the Proton acceptor. Residues asparagine 88 and aspartate 104 each coordinate shikimate. Residues 128–132, 151–156, and isoleucine 222 contribute to the NADP(+) site; these read GAGGA and NRTEER. Tyrosine 224 contacts shikimate. Position 245 (glycine 245) interacts with NADP(+).

The protein belongs to the shikimate dehydrogenase family. Homodimer.

The catalysed reaction is shikimate + NADP(+) = 3-dehydroshikimate + NADPH + H(+). It participates in metabolic intermediate biosynthesis; chorismate biosynthesis; chorismate from D-erythrose 4-phosphate and phosphoenolpyruvate: step 4/7. In terms of biological role, involved in the biosynthesis of the chorismate, which leads to the biosynthesis of aromatic amino acids. Catalyzes the reversible NADPH linked reduction of 3-dehydroshikimate (DHSA) to yield shikimate (SA). This chain is Shikimate dehydrogenase (NADP(+)), found in Methanosarcina mazei (strain ATCC BAA-159 / DSM 3647 / Goe1 / Go1 / JCM 11833 / OCM 88) (Methanosarcina frisia).